Consider the following 284-residue polypeptide: Pantothenate synthetase (284 aa).

Position 30-37 (30-37 (MGNLHDGH)) interacts with ATP. H37 serves as the catalytic Proton donor. Q61 contacts (R)-pantoate. Q61 serves as a coordination point for beta-alanine. 149 to 152 (GEKD) provides a ligand contact to ATP. (R)-pantoate is bound at residue Q155. Residues I178 and 186 to 189 (LSSR) contribute to the ATP site.

The protein belongs to the pantothenate synthetase family. Homodimer.

The protein localises to the cytoplasm. The catalysed reaction is (R)-pantoate + beta-alanine + ATP = (R)-pantothenate + AMP + diphosphate + H(+). The protein operates within cofactor biosynthesis; (R)-pantothenate biosynthesis; (R)-pantothenate from (R)-pantoate and beta-alanine: step 1/1. Catalyzes the condensation of pantoate with beta-alanine in an ATP-dependent reaction via a pantoyl-adenylate intermediate. The sequence is that of Pantothenate synthetase from Salmonella paratyphi A (strain ATCC 9150 / SARB42).